The chain runs to 276 residues: NH(3)-dependent NAD(+) synthetase (276 aa).

Residue 43-50 coordinates ATP; that stretch reads GISGGVDS. Aspartate 49 provides a ligand contact to Mg(2+). Arginine 146 provides a ligand contact to deamido-NAD(+). Threonine 166 provides a ligand contact to ATP. Glutamate 171 is a binding site for Mg(2+). Positions 179 and 186 each coordinate deamido-NAD(+). ATP is bound by residues lysine 195 and threonine 217. Position 266–267 (266–267) interacts with deamido-NAD(+); the sequence is HK.

Belongs to the NAD synthetase family. Homodimer.

The enzyme catalyses deamido-NAD(+) + NH4(+) + ATP = AMP + diphosphate + NAD(+) + H(+). The protein operates within cofactor biosynthesis; NAD(+) biosynthesis; NAD(+) from deamido-NAD(+) (ammonia route): step 1/1. Catalyzes the ATP-dependent amidation of deamido-NAD to form NAD. Uses ammonia as a nitrogen source. This is NH(3)-dependent NAD(+) synthetase from Shewanella pealeana (strain ATCC 700345 / ANG-SQ1).